We begin with the raw amino-acid sequence, 243 residues long: Probable transcriptional regulatory protein BP2308 (243 aa).

Residues 1–21 form a disordered region; the sequence is MAGHSKWANIQHRKGRQDAKR.

Belongs to the TACO1 family.

The protein localises to the cytoplasm. In Bordetella pertussis (strain Tohama I / ATCC BAA-589 / NCTC 13251), this protein is Probable transcriptional regulatory protein BP2308.